The chain runs to 407 residues: Elongation factor Tu, chloroplastic (407 aa).

Residues 10 to 212 enclose the tr-type G domain; the sequence is KPHVNIGTIG…SVDNYIPAPE (203 aa). Positions 19 to 26 are G1; sequence GHVDHGKT. GTP is bound at residue 19 to 26; it reads GHVDHGKT. T26 lines the Mg(2+) pocket. The interval 59–63 is G2; sequence GITIN. The interval 80-83 is G3; that stretch reads DCPG. GTP-binding positions include 80 to 84 and 135 to 138; these read DCPGH and NKAD. The G4 stretch occupies residues 135–138; it reads NKAD. The interval 173 to 175 is G5; sequence SAL.

This sequence belongs to the TRAFAC class translation factor GTPase superfamily. Classic translation factor GTPase family. EF-Tu/EF-1A subfamily.

It is found in the plastid. The protein resides in the chloroplast. The catalysed reaction is GTP + H2O = GDP + phosphate + H(+). In terms of biological role, GTP hydrolase that promotes the GTP-dependent binding of aminoacyl-tRNA to the A-site of ribosomes during protein biosynthesis. The protein is Elongation factor Tu, chloroplastic (tufA) of Emiliania huxleyi (Coccolithophore).